A 173-amino-acid chain; its full sequence is C-phycocyanin beta subunit (173 aa).

Asn73 bears the N4-methylasparagine mark. Residues Cys83 and Cys154 each contribute to the (2R,3E)-phycocyanobilin site.

The protein belongs to the phycobiliprotein family. As to quaternary structure, heterodimer of an alpha and a beta subunit. Heterodimers further assemble into trimers and the trimers into hexamers. Contains two covalently linked bilin chromophores.

The protein localises to the cellular thylakoid membrane. In terms of biological role, light-harvesting photosynthetic bile pigment-protein from the phycobiliprotein complex (phycobilisome, PBS). Phycocyanin is the major phycobiliprotein in the PBS rod. In Mastigocladus laminosus (Fischerella sp.), this protein is C-phycocyanin beta subunit (cpcB).